A 317-amino-acid chain; its full sequence is Neurogenic differentiation factor 6-B (317 aa).

2 disordered regions span residues 1-90 and 297-317; these read MLTV…ERSR and DLHPRSQSFQSQDELNTGYHN. Residues 37–56 show a composition bias toward acidic residues; it reads EAEDDNTDREEEEEREEDEN. Residues 59–69 are compositionally biased toward basic residues; it reads PKKKGPRKKKS. Residues 65 to 70 carry the Nuclear localization signal motif; sequence RKKKSE. Residues 70 to 90 show a composition bias toward basic and acidic residues; it reads EGRGDRVKMRRQEANARERSR. The bHLH domain maps to 78–130; sequence MRRQEANARERSRMHGLNDALESLRKVVPCYSKTQKLSKIETLRLAKNYIWAL. Polar residues predominate over residues 301–317; that stretch reads RSQSFQSQDELNTGYHN.

As to quaternary structure, efficient DNA binding requires dimerization with another bHLH protein. Embryonic olfactory bulbs and olfactory placodes. In adult, expressed in brain and eye.

It is found in the nucleus. In terms of biological role, differentiation factor required for neurogenesis. Does not act as an upstream activator of isl1. In Danio rerio (Zebrafish), this protein is Neurogenic differentiation factor 6-B.